The following is a 419-amino-acid chain: Aminoacyltransferase FemB (419 aa).

Belongs to the FemABX family. As to quaternary structure, homodimer. Interacts with FemA.

The protein resides in the cytoplasm. It catalyses the reaction MurNAc-L-Ala-D-isoglutaminyl-L-Lys-(N(6)-tri-Gly)-D-Ala-D-Ala-diphospho-di-trans,octa-cis-undecaprenyl-GlcNAc + 2 glycyl-tRNA(Gly) = MurNAc-L-Ala-D-isoglutaminyl-L-Lys-(N(6)-penta-Gly)-D-Ala-D-Ala-diphospho-di-trans,octa-cis-undecaprenyl-GlcNAc + 2 tRNA(Gly) + 2 H(+). Catalyzes the formation of the pentaglycine interpeptide bridge, which is characteristic of the S.aureus peptidoglycan. Adds glycines 4 and 5 of the pentaglycine bridge, using glycyl-tRNA(Gly) as donor. This is Aminoacyltransferase FemB (femB) from Staphylococcus aureus (strain bovine RF122 / ET3-1).